We begin with the raw amino-acid sequence, 591 residues long: Aspartate--tRNA(Asp/Asn) ligase (591 aa).

Position 170 (Glu170) interacts with L-aspartate. The interval 194 to 197 is aspartate; sequence QLFK. Arg216 serves as a coordination point for L-aspartate. ATP is bound by residues 216-218 and Gln225; that span reads RDE. Residue His448 coordinates L-aspartate. Glu482 provides a ligand contact to ATP. Arg489 is a binding site for L-aspartate. Residue 534-537 coordinates ATP; it reads GWDR. A disordered region spans residues 559-591; sequence GGVDPLTDAPAPITEQQRKESGIDVKPEPSKPH. Basic and acidic residues predominate over residues 574–591; sequence QQRKESGIDVKPEPSKPH.

The protein belongs to the class-II aminoacyl-tRNA synthetase family. Type 1 subfamily. Homodimer.

Its subcellular location is the cytoplasm. The enzyme catalyses tRNA(Asx) + L-aspartate + ATP = L-aspartyl-tRNA(Asx) + AMP + diphosphate. Aspartyl-tRNA synthetase with relaxed tRNA specificity since it is able to aspartylate not only its cognate tRNA(Asp) but also tRNA(Asn). Reaction proceeds in two steps: L-aspartate is first activated by ATP to form Asp-AMP and then transferred to the acceptor end of tRNA(Asp/Asn). The sequence is that of Aspartate--tRNA(Asp/Asn) ligase from Mycolicibacterium paratuberculosis (strain ATCC BAA-968 / K-10) (Mycobacterium paratuberculosis).